We begin with the raw amino-acid sequence, 435 residues long: Arginine biosynthesis bifunctional protein ArgJ, mitochondrial (435 aa).

Residues T167, K193, T204, E291, N430, and T435 each coordinate substrate. T204 (nucleophile) is an active-site residue.

Belongs to the ArgJ family. As to quaternary structure, heterodimer of an alpha and a beta chain. Post-translationally, the alpha and beta chains are autoproteolytically processed from a single precursor protein within the mitochondrion.

Its subcellular location is the mitochondrion matrix. It catalyses the reaction N(2)-acetyl-L-ornithine + L-glutamate = N-acetyl-L-glutamate + L-ornithine. The catalysed reaction is L-glutamate + acetyl-CoA = N-acetyl-L-glutamate + CoA + H(+). It participates in amino-acid biosynthesis; L-arginine biosynthesis; L-ornithine and N-acetyl-L-glutamate from L-glutamate and N(2)-acetyl-L-ornithine (cyclic): step 1/1. The protein operates within amino-acid biosynthesis; L-arginine biosynthesis; N(2)-acetyl-L-ornithine from L-glutamate: step 1/4. In terms of biological role, catalyzes two activities which are involved in the cyclic version of arginine biosynthesis: the synthesis of acetylglutamate from glutamate and acetyl-CoA, and of ornithine by transacetylation between acetylornithine and glutamate. This Heterostelium pallidum (strain ATCC 26659 / Pp 5 / PN500) (Cellular slime mold) protein is Arginine biosynthesis bifunctional protein ArgJ, mitochondrial.